A 257-amino-acid polypeptide reads, in one-letter code: Flavin-dependent thymidylate synthase (257 aa).

The ThyX domain occupies 1–202 (MNVKLVSYTR…PRLFRYVGPN (202 aa)). FAD-binding positions include Ser-55, 79–81 (RHR), and Gln-87. DUMP-binding positions include 76–79 (QLVR), 87–91 (QMSHR), and Arg-141. The ThyX motif signature appears at 79-89 (RHRVASYTQMS). FAD-binding positions include 157–159 (NAR) and Asn-163. Residue Arg-168 coordinates dUMP. Arg-168 (involved in ionization of N3 of dUMP, leading to its activation) is an active-site residue.

Belongs to the thymidylate synthase ThyX family. In terms of assembly, homotetramer. Requires FAD as cofactor.

The catalysed reaction is dUMP + (6R)-5,10-methylene-5,6,7,8-tetrahydrofolate + NADPH + H(+) = dTMP + (6S)-5,6,7,8-tetrahydrofolate + NADP(+). Its pathway is pyrimidine metabolism; dTTP biosynthesis. In terms of biological role, catalyzes the reductive methylation of 2'-deoxyuridine-5'-monophosphate (dUMP) to 2'-deoxythymidine-5'-monophosphate (dTMP) while utilizing 5,10-methylenetetrahydrofolate (mTHF) as the methyl donor, and NADPH and FADH(2) as the reductant. The sequence is that of Flavin-dependent thymidylate synthase from Sulfurisphaera tokodaii (strain DSM 16993 / JCM 10545 / NBRC 100140 / 7) (Sulfolobus tokodaii).